The primary structure comprises 207 residues: Large ribosomal subunit protein uL4 (207 aa).

The tract at residues 48–70 is disordered; that stretch reads KAQKTRSEVSGGGAKPWRQKGTG.

This sequence belongs to the universal ribosomal protein uL4 family. As to quaternary structure, part of the 50S ribosomal subunit.

One of the primary rRNA binding proteins, this protein initially binds near the 5'-end of the 23S rRNA. It is important during the early stages of 50S assembly. It makes multiple contacts with different domains of the 23S rRNA in the assembled 50S subunit and ribosome. In terms of biological role, forms part of the polypeptide exit tunnel. The protein is Large ribosomal subunit protein uL4 of Francisella tularensis subsp. holarctica (strain FTNF002-00 / FTA).